The following is a 357-amino-acid chain: Cobalt-precorrin-5B C(1)-methyltransferase (357 aa).

It belongs to the CbiD family.

It catalyses the reaction Co-precorrin-5B + S-adenosyl-L-methionine = Co-precorrin-6A + S-adenosyl-L-homocysteine. It functions in the pathway cofactor biosynthesis; adenosylcobalamin biosynthesis; cob(II)yrinate a,c-diamide from sirohydrochlorin (anaerobic route): step 6/10. Functionally, catalyzes the methylation of C-1 in cobalt-precorrin-5B to form cobalt-precorrin-6A. This is Cobalt-precorrin-5B C(1)-methyltransferase from Alkaliphilus oremlandii (strain OhILAs) (Clostridium oremlandii (strain OhILAs)).